We begin with the raw amino-acid sequence, 464 residues long: Juvenile hormone epoxide hydrolase 1 (464 aa).

The helical transmembrane segment at 7–27 (MLIFAAIAGIAVLYYQITKEL) threads the bilayer. Aspartate 224 serves as the catalytic Nucleophile. Tyrosine 370 acts as the Proton donor in catalysis. Histidine 427 serves as the catalytic Proton acceptor.

Belongs to the peptidase S33 family. Developing oocytes, fat body and midgut epithelium of adults.

The protein resides in the microsome membrane. It is found in the endoplasmic reticulum membrane. It carries out the reaction cis-stilbene oxide + H2O = (1R,2R)-hydrobenzoin. The enzyme catalyses 1-(4-methoxyphenyl)-N-methyl-N-[(3-methyloxetan-3-yl)methyl]methanamine + H2O = 2-{[(4-methoxybenzyl)(methyl)amino]methyl}-2-methylpropane-1,3-diol. In terms of biological role, catalyzes juvenile hormone hydrolysis. This chain is Juvenile hormone epoxide hydrolase 1, found in Ctenocephalides felis (Cat flea).